The chain runs to 403 residues: Phosphopentomutase (403 aa).

Positions 13, 298, 303, 339, 340, and 351 each coordinate Mn(2+).

Belongs to the phosphopentomutase family. Mn(2+) is required as a cofactor.

It is found in the cytoplasm. The enzyme catalyses 2-deoxy-alpha-D-ribose 1-phosphate = 2-deoxy-D-ribose 5-phosphate. It carries out the reaction alpha-D-ribose 1-phosphate = D-ribose 5-phosphate. The protein operates within carbohydrate degradation; 2-deoxy-D-ribose 1-phosphate degradation; D-glyceraldehyde 3-phosphate and acetaldehyde from 2-deoxy-alpha-D-ribose 1-phosphate: step 1/2. Its function is as follows. Isomerase that catalyzes the conversion of deoxy-ribose 1-phosphate (dRib-1-P) and ribose 1-phosphate (Rib-1-P) to deoxy-ribose 5-phosphate (dRib-5-P) and ribose 5-phosphate (Rib-5-P), respectively. The sequence is that of Phosphopentomutase from Streptococcus mutans serotype c (strain ATCC 700610 / UA159).